A 349-amino-acid polypeptide reads, in one-letter code: 4-hydroxythreonine-4-phosphate dehydrogenase (349 aa).

T135 contacts substrate. A divalent metal cation-binding residues include H170, H215, and H276. Residues K284, N293, and R302 each contribute to the substrate site.

It belongs to the PdxA family. As to quaternary structure, homodimer. A divalent metal cation serves as cofactor.

Its subcellular location is the cytoplasm. It catalyses the reaction 4-(phosphooxy)-L-threonine + NAD(+) = 3-amino-2-oxopropyl phosphate + CO2 + NADH. It functions in the pathway cofactor biosynthesis; pyridoxine 5'-phosphate biosynthesis; pyridoxine 5'-phosphate from D-erythrose 4-phosphate: step 4/5. In terms of biological role, catalyzes the NAD(P)-dependent oxidation of 4-(phosphooxy)-L-threonine (HTP) into 2-amino-3-oxo-4-(phosphooxy)butyric acid which spontaneously decarboxylates to form 3-amino-2-oxopropyl phosphate (AHAP). The polypeptide is 4-hydroxythreonine-4-phosphate dehydrogenase (Synechococcus sp. (strain JA-3-3Ab) (Cyanobacteria bacterium Yellowstone A-Prime)).